A 301-amino-acid polypeptide reads, in one-letter code: Probable alpha-L-glutamate ligase (301 aa).

One can recognise an ATP-grasp domain in the interval 104–287 (LQLLSRKGIG…VAGLIYEFIE (184 aa)). Residues K141, 178 to 179 (EF), D187, and 211 to 213 (RSN) each bind ATP. Residues D248, E260, and N262 each coordinate Mg(2+). Mn(2+)-binding residues include D248, E260, and N262.

The protein belongs to the RimK family. Mg(2+) is required as a cofactor. The cofactor is Mn(2+).

This chain is Probable alpha-L-glutamate ligase, found in Shewanella loihica (strain ATCC BAA-1088 / PV-4).